The sequence spans 558 residues: Dihydroxy-acid dehydratase (558 aa).

C51 is a [2Fe-2S] cluster binding site. D83 is a Mg(2+) binding site. C124 contacts [2Fe-2S] cluster. 2 residues coordinate Mg(2+): D125 and K126. K126 carries the post-translational modification N6-carboxylysine. Position 196 (C196) interacts with [2Fe-2S] cluster. E447 serves as a coordination point for Mg(2+). Catalysis depends on S473, which acts as the Proton acceptor.

This sequence belongs to the IlvD/Edd family. Homodimer. [2Fe-2S] cluster serves as cofactor. It depends on Mg(2+) as a cofactor.

The catalysed reaction is (2R)-2,3-dihydroxy-3-methylbutanoate = 3-methyl-2-oxobutanoate + H2O. The enzyme catalyses (2R,3R)-2,3-dihydroxy-3-methylpentanoate = (S)-3-methyl-2-oxopentanoate + H2O. It participates in amino-acid biosynthesis; L-isoleucine biosynthesis; L-isoleucine from 2-oxobutanoate: step 3/4. The protein operates within amino-acid biosynthesis; L-valine biosynthesis; L-valine from pyruvate: step 3/4. In terms of biological role, functions in the biosynthesis of branched-chain amino acids. Catalyzes the dehydration of (2R,3R)-2,3-dihydroxy-3-methylpentanoate (2,3-dihydroxy-3-methylvalerate) into 2-oxo-3-methylpentanoate (2-oxo-3-methylvalerate) and of (2R)-2,3-dihydroxy-3-methylbutanoate (2,3-dihydroxyisovalerate) into 2-oxo-3-methylbutanoate (2-oxoisovalerate), the penultimate precursor to L-isoleucine and L-valine, respectively. This chain is Dihydroxy-acid dehydratase, found in Flavobacterium psychrophilum (strain ATCC 49511 / DSM 21280 / CIP 103535 / JIP02/86).